We begin with the raw amino-acid sequence, 567 residues long: Glucose-6-phosphate isomerase, cytosolic A (567 aa).

Residues 156–157 (GS), 212–217 (SKTFTT), Q356, E360, H391, and K516 contribute to the D-glucose 6-phosphate site. E360 serves as the catalytic Proton donor. Residues H391 and K516 contribute to the active site.

Belongs to the GPI family. In terms of assembly, homodimer.

It is found in the cytoplasm. The enzyme catalyses alpha-D-glucose 6-phosphate = beta-D-fructose 6-phosphate. Its pathway is carbohydrate degradation; glycolysis; D-glyceraldehyde 3-phosphate and glycerone phosphate from D-glucose: step 2/4. Its function is as follows. Catalyzes the conversion of glucose-6-phosphate to fructose-6-phosphate, the second step in glycolysis, and the reverse reaction during gluconeogenesis. In Oryza sativa subsp. japonica (Rice), this protein is Glucose-6-phosphate isomerase, cytosolic A.